A 199-amino-acid polypeptide reads, in one-letter code: Probable GTP-binding protein EngB (199 aa).

The EngB-type G domain occupies 28-199; the sequence is DLPEIALAGR…DSWDAILEQV (172 aa). Residues 36–43, 63–67, 81–84, 148–151, and 180–182 contribute to the GTP site; these read GRSNVGKS, GKTQL, DVPG, TKAD, and FSS. Residues Ser43 and Thr65 each coordinate Mg(2+).

This sequence belongs to the TRAFAC class TrmE-Era-EngA-EngB-Septin-like GTPase superfamily. EngB GTPase family. Mg(2+) serves as cofactor.

Functionally, necessary for normal cell division and for the maintenance of normal septation. In Streptococcus pyogenes serotype M49 (strain NZ131), this protein is Probable GTP-binding protein EngB.